Here is a 108-residue protein sequence, read N- to C-terminus: Nucleoid-associated protein HCH_02614 (108 aa).

Belongs to the YbaB/EbfC family. In terms of assembly, homodimer.

It localises to the cytoplasm. The protein resides in the nucleoid. Functionally, binds to DNA and alters its conformation. May be involved in regulation of gene expression, nucleoid organization and DNA protection. The chain is Nucleoid-associated protein HCH_02614 from Hahella chejuensis (strain KCTC 2396).